The following is a 268-amino-acid chain: Tryptophan synthase alpha chain (268 aa).

Residues Glu-49 and Asp-60 each act as proton acceptor in the active site.

Belongs to the TrpA family. Tetramer of two alpha and two beta chains.

It carries out the reaction (1S,2R)-1-C-(indol-3-yl)glycerol 3-phosphate + L-serine = D-glyceraldehyde 3-phosphate + L-tryptophan + H2O. Its pathway is amino-acid biosynthesis; L-tryptophan biosynthesis; L-tryptophan from chorismate: step 5/5. Functionally, the alpha subunit is responsible for the aldol cleavage of indoleglycerol phosphate to indole and glyceraldehyde 3-phosphate. This chain is Tryptophan synthase alpha chain, found in Yersinia pestis bv. Antiqua (strain Antiqua).